The primary structure comprises 347 residues: Protein-glutamate methylesterase/protein-glutamine glutaminase 3 (347 aa).

The Response regulatory domain occupies 3 to 120; it reads QVFIVDDSAV…KNFLEESEIL (118 aa). 4-aspartylphosphate is present on Asp54. The 189-residue stretch at 159–347 folds into the CheB-type methylesterase domain; that stretch reads IDTTDKLIAI…SKIVGEVQYF (189 aa). Residues Ser171, His197, and Asp293 contribute to the active site.

This sequence belongs to the CheB family. Post-translationally, phosphorylated by CheA. Phosphorylation of the N-terminal regulatory domain activates the methylesterase activity.

The protein resides in the cytoplasm. The catalysed reaction is [protein]-L-glutamate 5-O-methyl ester + H2O = L-glutamyl-[protein] + methanol + H(+). It carries out the reaction L-glutaminyl-[protein] + H2O = L-glutamyl-[protein] + NH4(+). Involved in chemotaxis. Part of a chemotaxis signal transduction system that modulates chemotaxis in response to various stimuli. Catalyzes the demethylation of specific methylglutamate residues introduced into the chemoreceptors (methyl-accepting chemotaxis proteins or MCP) by CheR. Also mediates the irreversible deamidation of specific glutamine residues to glutamic acid. This chain is Protein-glutamate methylesterase/protein-glutamine glutaminase 3, found in Leptospira interrogans serogroup Icterohaemorrhagiae serovar copenhageni (strain Fiocruz L1-130).